The primary structure comprises 120 residues: Late cornified envelope-like proline-rich protein 1 (120 aa).

The protein belongs to the cornifin (SPRR) family.

The chain is Late cornified envelope-like proline-rich protein 1 (Lelp1) from Mus musculus (Mouse).